We begin with the raw amino-acid sequence, 179 residues long: ATP synthase subunit delta (179 aa).

This sequence belongs to the ATPase delta chain family. F-type ATPases have 2 components, F(1) - the catalytic core - and F(0) - the membrane proton channel. F(1) has five subunits: alpha(3), beta(3), gamma(1), delta(1), epsilon(1). F(0) has three main subunits: a(1), b(2) and c(10-14). The alpha and beta chains form an alternating ring which encloses part of the gamma chain. F(1) is attached to F(0) by a central stalk formed by the gamma and epsilon chains, while a peripheral stalk is formed by the delta and b chains.

Its subcellular location is the cell inner membrane. Its function is as follows. F(1)F(0) ATP synthase produces ATP from ADP in the presence of a proton or sodium gradient. F-type ATPases consist of two structural domains, F(1) containing the extramembraneous catalytic core and F(0) containing the membrane proton channel, linked together by a central stalk and a peripheral stalk. During catalysis, ATP synthesis in the catalytic domain of F(1) is coupled via a rotary mechanism of the central stalk subunits to proton translocation. Functionally, this protein is part of the stalk that links CF(0) to CF(1). It either transmits conformational changes from CF(0) to CF(1) or is implicated in proton conduction. This Acidithiobacillus ferridurans protein is ATP synthase subunit delta.